The primary structure comprises 151 residues: SsrA-binding protein (151 aa).

Belongs to the SmpB family.

Its subcellular location is the cytoplasm. Its function is as follows. Required for rescue of stalled ribosomes mediated by trans-translation. Binds to transfer-messenger RNA (tmRNA), required for stable association of tmRNA with ribosomes. tmRNA and SmpB together mimic tRNA shape, replacing the anticodon stem-loop with SmpB. tmRNA is encoded by the ssrA gene; the 2 termini fold to resemble tRNA(Ala) and it encodes a 'tag peptide', a short internal open reading frame. During trans-translation Ala-aminoacylated tmRNA acts like a tRNA, entering the A-site of stalled ribosomes, displacing the stalled mRNA. The ribosome then switches to translate the ORF on the tmRNA; the nascent peptide is terminated with the 'tag peptide' encoded by the tmRNA and targeted for degradation. The ribosome is freed to recommence translation, which seems to be the essential function of trans-translation. The sequence is that of SsrA-binding protein from Flavobacterium johnsoniae (strain ATCC 17061 / DSM 2064 / JCM 8514 / BCRC 14874 / CCUG 350202 / NBRC 14942 / NCIMB 11054 / UW101) (Cytophaga johnsonae).